Consider the following 162-residue polypeptide: UPF0260 protein Atu0932 (162 aa).

It belongs to the UPF0260 family.

This chain is UPF0260 protein Atu0932, found in Agrobacterium fabrum (strain C58 / ATCC 33970) (Agrobacterium tumefaciens (strain C58)).